The following is a 398-amino-acid chain: 1-deoxy-D-xylulose 5-phosphate reductoisomerase (398 aa).

Residues Thr-10, Gly-11, Ser-12, Ile-13, Asn-38, and Asn-124 each coordinate NADPH. Residue Lys-125 coordinates 1-deoxy-D-xylulose 5-phosphate. Glu-126 is an NADPH binding site. A Mn(2+)-binding site is contributed by Asp-150. 1-deoxy-D-xylulose 5-phosphate contacts are provided by Ser-151, Glu-152, Ser-176, and His-199. Mn(2+) is bound at residue Glu-152. Gly-205 is an NADPH binding site. 4 residues coordinate 1-deoxy-D-xylulose 5-phosphate: Ser-212, Asn-217, Lys-218, and Glu-221. Glu-221 is a binding site for Mn(2+).

It belongs to the DXR family. Mg(2+) is required as a cofactor. Mn(2+) serves as cofactor.

It catalyses the reaction 2-C-methyl-D-erythritol 4-phosphate + NADP(+) = 1-deoxy-D-xylulose 5-phosphate + NADPH + H(+). Its pathway is isoprenoid biosynthesis; isopentenyl diphosphate biosynthesis via DXP pathway; isopentenyl diphosphate from 1-deoxy-D-xylulose 5-phosphate: step 1/6. In terms of biological role, catalyzes the NADPH-dependent rearrangement and reduction of 1-deoxy-D-xylulose-5-phosphate (DXP) to 2-C-methyl-D-erythritol 4-phosphate (MEP). This is 1-deoxy-D-xylulose 5-phosphate reductoisomerase from Rippkaea orientalis (strain PCC 8801 / RF-1) (Cyanothece sp. (strain PCC 8801)).